The sequence spans 403 residues: Riboflavin biosynthesis protein RibBA (403 aa).

Residues 1–204 form a DHBP synthase region; the sequence is MKNKVFASIG…IGELVNYRRR (204 aa). D-ribulose 5-phosphate-binding positions include 30–31, Asp-35, 143–147, and Glu-167; these read RE and RTGHT. Mg(2+) is bound at residue Glu-31. His-146 contacts Mg(2+). The tract at residues 205-403 is GTP cyclohydrolase II; that stretch reads TEKFISEIVN…EKMGHMLKKV (199 aa). 255–259 lines the GTP pocket; that stretch reads RVHSS. Cys-260, Cys-271, and Cys-273 together coordinate Zn(2+). GTP contacts are provided by residues Gln-276, 298 to 300, and Thr-320; that span reads EGR. The Proton acceptor; for GTP cyclohydrolase activity role is filled by Asp-332. Arg-334 serves as the catalytic Nucleophile; for GTP cyclohydrolase activity. GTP is bound by residues Thr-355 and Lys-360.

In the N-terminal section; belongs to the DHBP synthase family. The protein in the C-terminal section; belongs to the GTP cyclohydrolase II family. The cofactor is Mg(2+). Mn(2+) is required as a cofactor. It depends on Zn(2+) as a cofactor.

It catalyses the reaction D-ribulose 5-phosphate = (2S)-2-hydroxy-3-oxobutyl phosphate + formate + H(+). The catalysed reaction is GTP + 4 H2O = 2,5-diamino-6-hydroxy-4-(5-phosphoribosylamino)-pyrimidine + formate + 2 phosphate + 3 H(+). Its pathway is cofactor biosynthesis; riboflavin biosynthesis; 2-hydroxy-3-oxobutyl phosphate from D-ribulose 5-phosphate: step 1/1. It participates in cofactor biosynthesis; riboflavin biosynthesis; 5-amino-6-(D-ribitylamino)uracil from GTP: step 1/4. Its function is as follows. Catalyzes the conversion of D-ribulose 5-phosphate to formate and 3,4-dihydroxy-2-butanone 4-phosphate. Functionally, catalyzes the conversion of GTP to 2,5-diamino-6-ribosylamino-4(3H)-pyrimidinone 5'-phosphate (DARP), formate and pyrophosphate. This Endomicrobium trichonymphae protein is Riboflavin biosynthesis protein RibBA.